Consider the following 122-residue polypeptide: Large ribosomal subunit protein uL14 (122 aa).

It belongs to the universal ribosomal protein uL14 family. In terms of assembly, part of the 50S ribosomal subunit. Forms a cluster with proteins L3 and L19. In the 70S ribosome, L14 and L19 interact and together make contacts with the 16S rRNA in bridges B5 and B8.

In terms of biological role, binds to 23S rRNA. Forms part of two intersubunit bridges in the 70S ribosome. In Sulfurovum sp. (strain NBC37-1), this protein is Large ribosomal subunit protein uL14.